The sequence spans 292 residues: Shikimate dehydrogenase (NADP(+)) (292 aa).

Shikimate is bound by residues 25 to 27 and Thr-72; that span reads SKS. The Proton acceptor role is filled by Lys-76. Asn-97 and Asp-113 together coordinate shikimate. Residues 137 to 141, 161 to 166, and Met-230 each bind NADP(+); these read GAGGA and NRTQSK. Residue Tyr-232 participates in shikimate binding. An NADP(+)-binding site is contributed by Gly-254.

Belongs to the shikimate dehydrogenase family. In terms of assembly, homodimer.

It catalyses the reaction shikimate + NADP(+) = 3-dehydroshikimate + NADPH + H(+). The protein operates within metabolic intermediate biosynthesis; chorismate biosynthesis; chorismate from D-erythrose 4-phosphate and phosphoenolpyruvate: step 4/7. In terms of biological role, involved in the biosynthesis of the chorismate, which leads to the biosynthesis of aromatic amino acids. Catalyzes the reversible NADPH linked reduction of 3-dehydroshikimate (DHSA) to yield shikimate (SA). This Shewanella sp. (strain MR-7) protein is Shikimate dehydrogenase (NADP(+)).